Consider the following 389-residue polypeptide: 5-hydroxytryptamine receptor 1B (389 aa).

A disordered region spans residues 1–27 (MEDAGTPCAPPPPAGSQTGAPPANLSS). At 1–45 (MEDAGTPCAPPPPAGSQTGAPPANLSSAPHNCSAEGYIYQDSIAL) the chain is on the extracellular side. A compositionally biased stretch (polar residues) spans 15-27 (GSQTGAPPANLSS). 2 N-linked (GlcNAc...) asparagine glycosylation sites follow: N24 and N31. A helical membrane pass occupies residues 46-71 (PWKVLLAILLALLTLATTLSNAFVIA). The Cytoplasmic portion of the chain corresponds to 72–85 (TVYRTRKLHTPANY). A helical transmembrane segment spans residues 86 to 110 (LIASLAVTDLLVSILVMPISTMYAV). The Extracellular segment spans residues 111 to 118 (TGRWTLGQ). A helical transmembrane segment spans residues 119–144 (VVCDLWLSSDITCCTASILHLCVIAL). C121 and C198 are oxidised to a cystine. Residues D128 and T133 each coordinate ergotamine. Residues 145–147 (DRY) carry the DRY motif; important for ligand-induced conformation changes and signaling motif. The Cytoplasmic portion of the chain corresponds to 145–164 (DRYWAITDAVEYSAKRTPKR). A helical membrane pass occupies residues 165–183 (AAVMIALVWVFSISISLPP). Residues 184 to 204 (FFWRQAKAEEEVSDCVVNTDH) lie on the Extracellular side of the membrane. V200 serves as a coordination point for ergotamine. Residues 205–228 (ILYTVYSTVGAFYFPTLLLIALYG) form a helical membrane-spanning segment. The Cytoplasmic segment spans residues 229–314 (RIYVEARSRI…AARERKATKT (86 aa)). A compositionally biased stretch (polar residues) spans 258 to 271 (DSPGSTSSVTSVNS). A disordered region spans residues 258–281 (DSPGSTSSVTSVNSRAPDVPSESG). The helical transmembrane segment at 315-336 (LGIILGAFIVCWLPFFIISLVM) threads the bilayer. At 337 to 346 (PICKDACWFH) the chain is on the extracellular side. Residues 347–369 (LAIFDFFTWLGYLNSLINPIIYT) form a helical membrane-spanning segment. Positions 364-368 (NPIIY) match the NPxxY motif; important for ligand-induced conformation changes and signaling motif. At 370 to 389 (MSNEDFKQAFHKLIRFKCAS) the chain is on the cytoplasmic side. Residue C387 is the site of S-palmitoyl cysteine attachment.

The protein belongs to the G-protein coupled receptor 1 family. In terms of assembly, homodimer. Heterodimer with HTR1D. In terms of processing, phosphorylated. Desensitization of the receptor may be mediated by its phosphorylation. Palmitoylated.

Its subcellular location is the cell membrane. In terms of biological role, G-protein coupled receptor for 5-hydroxytryptamine (serotonin). Also functions as a receptor for ergot alkaloid derivatives, various anxiolytic and antidepressant drugs and other psychoactive substances, such as lysergic acid diethylamide (LSD). Ligand binding causes a conformation change that triggers signaling via guanine nucleotide-binding proteins (G proteins) and modulates the activity of downstream effectors, such as adenylate cyclase. HTR1B is coupled to G(i)/G(o) G alpha proteins and mediates inhibitory neurotransmission by inhibiting adenylate cyclase activity. Arrestin family members inhibit signaling via G proteins and mediate activation of alternative signaling pathways. Regulates the release of 5-hydroxytryptamine, dopamine and acetylcholine in the brain, and thereby affects neural activity, nociceptive processing, pain perception, mood and behavior. Besides, plays a role in vasoconstriction of cerebral arteries. In Vulpes vulpes (Red fox), this protein is 5-hydroxytryptamine receptor 1B (HTR1B).